Reading from the N-terminus, the 204-residue chain is Guanylate kinase (204 aa).

In terms of domain architecture, Guanylate kinase-like spans 6–184 (GLLIVLSGPA…AVDRIKAIVT (179 aa)). 13–20 (GPAGVGKG) contributes to the ATP binding site.

The protein belongs to the guanylate kinase family.

Its subcellular location is the cytoplasm. It catalyses the reaction GMP + ATP = GDP + ADP. Its function is as follows. Essential for recycling GMP and indirectly, cGMP. The polypeptide is Guanylate kinase (gmk) (Halalkalibacterium halodurans (strain ATCC BAA-125 / DSM 18197 / FERM 7344 / JCM 9153 / C-125) (Bacillus halodurans)).